A 418-amino-acid chain; its full sequence is E3 ubiquitin-protein ligase pellino homolog 1 (418 aa).

The FHA; atypical domain occupies 13 to 200 (APVKYGELIV…MHPRNGFTED (188 aa)). Ser-121 carries the phosphoserine; by ATM modification. Thr-127 carries the phosphothreonine; by ATM modification. The segment at 311-399 (CGHVHGYHNW…TFHAACPFCA (89 aa)) is ring-like domain; necessary for ubiqitination of RIPK3.

Belongs to the pellino family. Interacts with MAP3K7. Upon IL1B treatment, forms a complex with TRAF6, IRAK1, IRAK4 and MYD88; this complex recruits MAP3K7/TAK1, TAB1 and TAB2 to mediate NF-kappa-B activation. Direct binding of SMAD6 to PELI1 prevents the complex formation and hence negatively regulates IL1R-TLR signaling and eventually NF-kappa-B-mediated gene expression. Interacts (via atypical FHA domain) with RIPK3; preferentially binds to the 'Thr-182' phosphorylated form of RIPK3. Interacts with RIPK1 and IRAK1. Post-translationally, phosphorylation by IRAK1 and IRAK4 enhances its E3 ligase activity. Phosphorylated by ATM in response to DNA damage, promoting localization to DNA double-strand breaks (DSBs) and ability to mediate 'Lys-63'-linked ubiquitination of NBN. Sumoylated. In terms of tissue distribution, expressed at high levels in normal skin but decreased in keratinocytes from toxic epidermal necrolysis (TEN) patients (at protein level).

Its subcellular location is the chromosome. The catalysed reaction is S-ubiquitinyl-[E2 ubiquitin-conjugating enzyme]-L-cysteine + [acceptor protein]-L-lysine = [E2 ubiquitin-conjugating enzyme]-L-cysteine + N(6)-ubiquitinyl-[acceptor protein]-L-lysine.. It participates in protein modification; protein ubiquitination. In terms of biological role, E3 ubiquitin ligase catalyzing the covalent attachment of ubiquitin moieties onto substrate proteins. Involved in the TLR and IL-1 signaling pathways via interaction with the complex containing IRAK kinases and TRAF6. Acts as a positive regulator of inflammatory response in microglia through activation of NF-kappa-B and MAP kinase. Mediates 'Lys-63'-linked polyubiquitination of IRAK1 allowing subsequent NF-kappa-B activation. Conjugates 'Lys-63'-linked ubiquitin chains to the adapter protein ASC/PYCARD, which in turn is crucial for NLRP3 inflammasome activation. Mediates 'Lys-48'-linked polyubiquitination of RIPK3 leading to its subsequent proteasome-dependent degradation; preferentially recognizes and mediates the degradation of the 'Thr-182' phosphorylated form of RIPK3. Negatively regulates necroptosis by reducing RIPK3 expression. Mediates 'Lys-63'-linked ubiquitination of RIPK1. Following phosphorylation by ATM, catalyzes 'Lys-63'-linked ubiquitination of NBN, promoting DNA repair via homologous recombination. Negatively regulates activation of the metabolic mTORC1 signaling pathway by mediating 'Lys-63'-linked ubiquitination of mTORC1-inhibitory protein TSC1 and thereby promoting TSC1/TSC2 complex stability. The polypeptide is E3 ubiquitin-protein ligase pellino homolog 1 (Homo sapiens (Human)).